The sequence spans 47 residues: Diuretic hormone 2 (47 aa).

It belongs to the sauvagine/corticotropin-releasing factor/urotensin I family.

Its subcellular location is the secreted. Functionally, stimulates fluid secretion by the Malpighian tubules. Increases cyclic AMP production in Malpighian tubules. The protein is Diuretic hormone 2 of Tenebrio molitor (Yellow mealworm beetle).